A 524-amino-acid chain; its full sequence is Na(+)/H(+) antiporter NhaG (524 aa).

11 helical membrane-spanning segments follow: residues 6 to 26 (LHHIFELGFFVVMIAAGITAI), 33 to 53 (PYPIALVIVGTIIGLVHIPLF), 59 to 79 (FITEGEVFNFVIITLFLPALL), 98 to 118 (VLALFGGTLISFLIVGFSSMW), 126 to 146 (AAFVFAALMSATDPVSVLSIF), 169 to 189 (LAVVLFNISAFYLMTYLDLGI), 193 to 213 (GLGLWEFVKVISLGLIIGGVL), 242 to 262 (FLLAEMAGASGVIAVVVAALI), 283 to 303 (FWDVAALLANSLVFLMVGLEI), 312 to 332 (WGLAIMAIVIVLIARSAAVYI), and 374 to 394 (DILVFAFSVVLFSLVVQGLTI).

This sequence belongs to the monovalent cation:proton antiporter 1 (CPA1) transporter (TC 2.A.36) family.

It is found in the cell membrane. Na(+)/H(+) antiporter that extrudes sodium in exchange for external protons. Can also transport lithium. This is Na(+)/H(+) antiporter NhaG (nhaG) from Bacillus atrophaeus.